We begin with the raw amino-acid sequence, 357 residues long: UPF0744 protein C106.03 (357 aa).

S282 carries the post-translational modification Phosphoserine.

The protein belongs to the UPF0744 family.

It localises to the cytoplasm. This Schizosaccharomyces pombe (strain 972 / ATCC 24843) (Fission yeast) protein is UPF0744 protein C106.03.